A 90-amino-acid polypeptide reads, in one-letter code: Large ribosomal subunit protein bL27 (90 aa).

The segment at 1-21 (MASKKAGGSTRNGRDSEAKRL) is disordered.

It belongs to the bacterial ribosomal protein bL27 family.

This is Large ribosomal subunit protein bL27 from Neisseria gonorrhoeae (strain ATCC 700825 / FA 1090).